The sequence spans 151 residues: Ribosome maturation factor RimP (151 aa).

This sequence belongs to the RimP family.

It is found in the cytoplasm. Required for maturation of 30S ribosomal subunits. The chain is Ribosome maturation factor RimP from Shewanella sp. (strain MR-4).